Reading from the N-terminus, the 615-residue chain is MCGIVGYVGPQSALDVVMAGLKRLEYRGYDSAGVAVLADGGLATAKRAGKLVNLDKELSEHPLPAAATGIGHTRWATHGGPTDANAHPHLDNAGRVAVVHNGIIENFAPLRAELAERGHELPSETDTEVVAHLLAEEYSACADLAEAMRLVCGRLEGAFTLVAVHADAPDVVVGARRNSPLVVGVGEGEYFLASDVAAFIAHTRDAVELGQDQVVELRRDGVRVTGFDGSPADVRSYHVDWDASAAEKCGYASFMLKEIAEQPKAVADTLLGRIDGSGTLSLDEVRIPPGVLREVDKVVVVACGTAFHAGLIAKYAIEHWTRIPCEVELASEFRYRDPILDQQTLVVAISQSGETMDTLMALRHAREQGARVLAICNTNGSTIPRESDAVLYTHAGPEVAVASTKAFLTQLVACYLVALYLGQVRGTKYGDEIGDVVRDLSGISGAVERVLGTMDPVRQLARSLAHKNTVLFLGRHVGHPVALEGALKLKELAYMHAEGFAAGELKHGPIALIEEDLPVVVVVPSPRGRSVLHDKIVSNIQEIRARGARTIVIAEEGDEAVVPYADHLVRIPATPTLLQPLVATVPLQVFACELATARGNEVDQPRNLAKSVTVE.

Cys-2 acts as the Nucleophile; for GATase activity in catalysis. Positions 2-220 (CGIVGYVGPQ…QDQVVELRRD (219 aa)) constitute a Glutamine amidotransferase type-2 domain. 2 consecutive SIS domains span residues 287–427 (IPPG…VRGT) and 460–605 (LARS…VDQP). Lys-610 serves as the catalytic For Fru-6P isomerization activity.

In terms of assembly, homodimer.

It is found in the cytoplasm. It catalyses the reaction D-fructose 6-phosphate + L-glutamine = D-glucosamine 6-phosphate + L-glutamate. Its function is as follows. Catalyzes the first step in hexosamine metabolism, converting fructose-6P into glucosamine-6P using glutamine as a nitrogen source. In Streptomyces coelicolor (strain ATCC BAA-471 / A3(2) / M145), this protein is Glutamine--fructose-6-phosphate aminotransferase [isomerizing].